The primary structure comprises 119 residues: Large ribosomal subunit protein uL18 (119 aa).

This sequence belongs to the universal ribosomal protein uL18 family. In terms of assembly, part of the 50S ribosomal subunit; part of the 5S rRNA/L5/L18/L25 subcomplex. Contacts the 5S and 23S rRNAs.

This is one of the proteins that bind and probably mediate the attachment of the 5S RNA into the large ribosomal subunit, where it forms part of the central protuberance. This chain is Large ribosomal subunit protein uL18, found in Xanthomonas axonopodis pv. citri (strain 306).